Reading from the N-terminus, the 178-residue chain is Photosystem II extrinsic protein V (178 aa).

An N-terminal signal peptide occupies residues 1–38; the sequence is MFSKFFSLQKAFAAARRRLLILILVLGMAGYAWGPALA. Heme c is bound by residues C71, C74, H75, and H126.

This sequence belongs to the cytochrome c family. PsbV subfamily. PSII is composed of 1 copy each of membrane proteins PsbA, PsbB, PsbC, PsbD, PsbE, PsbF, PsbH, PsbI, PsbJ, PsbK, PsbL, PsbM, PsbT, PsbX, PsbY, PsbZ, Psb30/Ycf12, peripheral proteins PsbO, CyanoQ (PsbQ), PsbU, PsbV and a large number of cofactors. It forms dimeric complexes. Heme c serves as cofactor.

It is found in the cellular thylakoid membrane. One of the extrinsic, lumenal subunits of photosystem II (PSII). PSII is a light-driven water plastoquinone oxidoreductase, using light energy to abstract electrons from H(2)O, generating a proton gradient subsequently used for ATP formation. The extrinsic proteins stabilize the structure of photosystem II oxygen-evolving complex (OEC), the ion environment of oxygen evolution and protect the OEC against heat-induced inactivation. Low-potential cytochrome c that plays a role in the OEC of PSII. This is Photosystem II extrinsic protein V from Synechococcus sp. (strain JA-3-3Ab) (Cyanobacteria bacterium Yellowstone A-Prime).